The sequence spans 505 residues: MAVVASAPGKVLMTGGYLVLEKPNAGLVLSTNARFYAIVKPINEEVKPESWAWKWTDVKLTSPQLSRESMYKLSLNHLTLQSVSASDSRNPFVEHAIQYAIAAAHLATEKDKESLHKLLLQGLDITILGSNDFYSYRNQIESAGLPLTPESLGTLAPFASITFNAAESNGANSKPEVAKTGLGSSAAMTTAVVAALLHYLGVVDLSDPCKEGKFGCSDLDVIHMIAQTSHCLAQGKVGSGFDVSCAVYGSQRYVRFSPEVLSFAQVAVTGLPLNEVIGTILKGKWDNKRTEFSLPPLMNLFLGEPGSGGSSTPSMVGAVKKWQMSDPEKARENWQNLSDANLELETKLNDLSKLAKDHWDVYLRVIKSCSVLTSEKWVLHATEPINEAIIKELLEAREAMLRIRILMRQMGEAASVPIEPESQTQLLDSTMSAEGVLLAGVPGAGGFDAIFAITLGDSGTKLTQAWSSHNVLALLVREDPHGVCLESGDPRTTCITSGVSSIHLE.

A2 is subject to N-acetylalanine. Positions 57 to 65 (DVKLTSPQL) match the Peroxisomal targeting signal PTS2 motif. An ATP-binding site is contributed by 177-187 (VAKTGLGSSAA).

The protein belongs to the GHMP kinase family. Mevalonate kinase subfamily.

It is found in the peroxisome. It catalyses the reaction (R)-5-phosphomevalonate + ATP = (R)-5-diphosphomevalonate + ADP. Its pathway is isoprenoid biosynthesis; isopentenyl diphosphate biosynthesis via mevalonate pathway; isopentenyl diphosphate from (R)-mevalonate: step 2/3. This is Phosphomevalonate kinase, peroxisomal from Arabidopsis thaliana (Mouse-ear cress).